The chain runs to 215 residues: LexA repressor (215 aa).

The H-T-H motif DNA-binding region spans 28-48 (RAEIAAELGFSSPNAAEEHLR). Residues Ser-133 and Lys-170 each act as for autocatalytic cleavage activity in the active site.

Belongs to the peptidase S24 family. In terms of assembly, homodimer.

The enzyme catalyses Hydrolysis of Ala-|-Gly bond in repressor LexA.. Its function is as follows. Represses a number of genes involved in the response to DNA damage (SOS response), including recA and lexA. In the presence of single-stranded DNA, RecA interacts with LexA causing an autocatalytic cleavage which disrupts the DNA-binding part of LexA, leading to derepression of the SOS regulon and eventually DNA repair. In Burkholderia ambifaria (strain ATCC BAA-244 / DSM 16087 / CCUG 44356 / LMG 19182 / AMMD) (Burkholderia cepacia (strain AMMD)), this protein is LexA repressor.